Here is a 351-residue protein sequence, read N- to C-terminus: Uroporphyrinogen decarboxylase (351 aa).

Residues 26 to 30, Asp76, Tyr153, Ser208, and His323 each bind substrate; that span reads RQAGR.

This sequence belongs to the uroporphyrinogen decarboxylase family. Homodimer.

Its subcellular location is the cytoplasm. It catalyses the reaction uroporphyrinogen III + 4 H(+) = coproporphyrinogen III + 4 CO2. It functions in the pathway porphyrin-containing compound metabolism; protoporphyrin-IX biosynthesis; coproporphyrinogen-III from 5-aminolevulinate: step 4/4. Its function is as follows. Catalyzes the decarboxylation of four acetate groups of uroporphyrinogen-III to yield coproporphyrinogen-III. This chain is Uroporphyrinogen decarboxylase, found in Prochlorococcus marinus (strain MIT 9211).